The chain runs to 90 residues: Putative defensin-like protein 243 (90 aa).

The N-terminal stretch at 1–19 (MKVEVIFLASCVLFSLIHA) is a signal peptide. 4 disulfides stabilise this stretch: cysteine 33–cysteine 88, cysteine 43–cysteine 72, cysteine 53–cysteine 82, and cysteine 70–cysteine 84.

Belongs to the DEFL family.

It is found in the secreted. In Arabidopsis thaliana (Mouse-ear cress), this protein is Putative defensin-like protein 243 (SCRL9).